A 542-amino-acid polypeptide reads, in one-letter code: Peptide chain release factor 3 (542 aa).

Residues 11 to 279 (EKRRTFAIIS…AYVEYAPSPR (269 aa)) enclose the tr-type G domain. GTP is bound by residues 20–27 (SHPDAGKT), 88–92 (DTPGH), and 142–145 (NKLD).

This sequence belongs to the TRAFAC class translation factor GTPase superfamily. Classic translation factor GTPase family. PrfC subfamily.

It is found in the cytoplasm. Its function is as follows. Increases the formation of ribosomal termination complexes and stimulates activities of RF-1 and RF-2. It binds guanine nucleotides and has strong preference for UGA stop codons. It may interact directly with the ribosome. The stimulation of RF-1 and RF-2 is significantly reduced by GTP and GDP, but not by GMP. The polypeptide is Peptide chain release factor 3 (Nitrosococcus oceani (strain ATCC 19707 / BCRC 17464 / JCM 30415 / NCIMB 11848 / C-107)).